The chain runs to 429 residues: Dihydroorotase (429 aa).

Zn(2+) contacts are provided by His62 and His64. Substrate is bound by residues 64–66 (HFR) and Asn96. Residues Asp154, His181, and His234 each coordinate Zn(2+). Asn280 serves as a coordination point for substrate. Residue Asp307 participates in Zn(2+) binding. Asp307 is an active-site residue. Residues His311 and 325 to 326 (FG) contribute to the substrate site.

It belongs to the metallo-dependent hydrolases superfamily. DHOase family. Class I DHOase subfamily. Zn(2+) is required as a cofactor.

The enzyme catalyses (S)-dihydroorotate + H2O = N-carbamoyl-L-aspartate + H(+). The protein operates within pyrimidine metabolism; UMP biosynthesis via de novo pathway; (S)-dihydroorotate from bicarbonate: step 3/3. In terms of biological role, catalyzes the reversible cyclization of carbamoyl aspartate to dihydroorotate. The sequence is that of Dihydroorotase from Latilactobacillus sakei subsp. sakei (strain 23K) (Lactobacillus sakei subsp. sakei).